Consider the following 275-residue polypeptide: Phosphate import ATP-binding protein PstB (275 aa).

The ABC transporter domain maps to 29-270 (VSVRDLNFYY…PTDRRTQDYI (242 aa)). Residue 61-68 (GPSGCGKS) participates in ATP binding.

It belongs to the ABC transporter superfamily. Phosphate importer (TC 3.A.1.7) family. The complex is composed of two ATP-binding proteins (PstB), two transmembrane proteins (PstC and PstA) and a solute-binding protein (PstS).

The protein resides in the cell inner membrane. It catalyses the reaction phosphate(out) + ATP + H2O = ADP + 2 phosphate(in) + H(+). Its function is as follows. Part of the ABC transporter complex PstSACB involved in phosphate import. Responsible for energy coupling to the transport system. This Rhodopseudomonas palustris (strain BisB18) protein is Phosphate import ATP-binding protein PstB.